The chain runs to 230 residues: Protein LURP-one-related 11 (230 aa).

Belongs to the LOR family.

In terms of biological role, might be related to the phospholipid scramblase and tubby-like superfamily of membrane tethered transcription factors. In Arabidopsis thaliana (Mouse-ear cress), this protein is Protein LURP-one-related 11.